Consider the following 441-residue polypeptide: Cysteine--tRNA ligase (441 aa).

Cys-24 provides a ligand contact to Zn(2+). The short motif at 26-36 (PTVYNYIHIGN) is the 'HIGH' region element. Zn(2+)-binding residues include Cys-204, His-230, and Glu-234. The 'KMSKS' region motif lies at 262–266 (KMSKS). Lys-265 serves as a coordination point for ATP.

The protein belongs to the class-I aminoacyl-tRNA synthetase family. Monomer. Zn(2+) is required as a cofactor.

It is found in the cytoplasm. The enzyme catalyses tRNA(Cys) + L-cysteine + ATP = L-cysteinyl-tRNA(Cys) + AMP + diphosphate. The sequence is that of Cysteine--tRNA ligase from Mycoplasma capricolum subsp. capricolum (strain California kid / ATCC 27343 / NCTC 10154).